A 702-amino-acid polypeptide reads, in one-letter code: MDQHQHLNKTAESASSEKKKTRRCNGFKMFLAALSFSYIAKALGGIIMKISITQIERRFDISSSLAGLIDGSFEIGNLLVIVFVSYFGSKLHRPKLIGIGCLLMGTGSILTSLPHFFMGYYRYSKETHINPSENSTSSLSTCLINQTLSFNGTSPEIVEKDCVKESGSHMWIYVFMGNMLRGIGETPIVPLGISYIDDFAKEGHSSLYLGSLNAIGMIGPVIGFALGSLFAKMYVDIGYVDLSTIRITPKDSRWVGAWWLGFLVSGLFSIISSIPFFFLPKNPNKPQKERKISLSLHVLKTNDDRNQTANLTNQGKNVTKNVTGFFQSLKSILTNPLYVIFLLLTLLQVSSFIGSFTYVFKYMEQQYGQSASHANFLLGIITIPTVATGMFLGGFIIKKFKLSLVGIAKFSFLTSMISFLFQLLYFPLICESKSVAGLTLTYDGNNSVASHVDVPLSYCNSECNCDESQWEPVCGNNGITYLSPCLAGCKSSSGIKKHTVFYNCSCVEVTGLQNRNYSAHLGECPRDNTCTRKFFIYVAIQVINSLFSATGGTTFILLTVKIVQPELKALAMGFQSMVIRTLGGILAPIYFGALIDKTCMKWSTNSCGAQGACRIYNSVFFGRVYLGLSIALRFPALVLYIVFIFAMKKKFQGKDTKASDNERKVMDEANLEFLNNGEHFVPSAGTDSKTCNLDMQDNAAAN.

Residues 1-28 lie on the Cytoplasmic side of the membrane; that stretch reads MDQHQHLNKTAESASSEKKKTRRCNGFK. A helical membrane pass occupies residues 29–48; the sequence is MFLAALSFSYIAKALGGIIM. At 49 to 67 the chain is on the extracellular side; that stretch reads KISITQIERRFDISSSLAG. The chain crosses the membrane as a helical span at residues 68–88; that stretch reads LIDGSFEIGNLLVIVFVSYFG. Over 89-94 the chain is Cytoplasmic; the sequence is SKLHRP. Residues 95-119 form a helical membrane-spanning segment; sequence KLIGIGCLLMGTGSILTSLPHFFMG. The Extracellular segment spans residues 120–168; it reads YYRYSKETHINPSENSTSSLSTCLINQTLSFNGTSPEIVEKDCVKESGS. Residues Asn-134, Asn-145, and Asn-151 are each glycosylated (N-linked (GlcNAc...) asparagine). A helical transmembrane segment spans residues 169 to 197; that stretch reads HMWIYVFMGNMLRGIGETPIVPLGISYID. The Cytoplasmic segment spans residues 198-216; it reads DFAKEGHSSLYLGSLNAIG. Residues 217–237 traverse the membrane as a helical segment; that stretch reads MIGPVIGFALGSLFAKMYVDI. The Extracellular segment spans residues 238–255; the sequence is GYVDLSTIRITPKDSRWV. A helical transmembrane segment spans residues 256–280; the sequence is GAWWLGFLVSGLFSIISSIPFFFLP. Over 281–331 the chain is Cytoplasmic; that stretch reads KNPNKPQKERKISLSLHVLKTNDDRNQTANLTNQGKNVTKNVTGFFQSLKS. Phosphoserine occurs at positions 293 and 295. The chain crosses the membrane as a helical span at residues 332–353; the sequence is ILTNPLYVIFLLLTLLQVSSFI. The Extracellular segment spans residues 354–373; that stretch reads GSFTYVFKYMEQQYGQSASH. A helical transmembrane segment spans residues 374-397; sequence ANFLLGIITIPTVATGMFLGGFII. The Cytoplasmic segment spans residues 398–401; the sequence is KKFK. The helical transmembrane segment at 402 to 425 threads the bilayer; that stretch reads LSLVGIAKFSFLTSMISFLFQLLY. Residues 426 to 537 are Extracellular-facing; that stretch reads FPLICESKSV…NTCTRKFFIY (112 aa). A glycan (N-linked (GlcNAc...) asparagine) is linked at Asn-445. Residues 453–508 enclose the Kazal-like domain; sequence DVPLSYCNSECNCDESQWEPVCGNNGITYLSPCLAGCKSSSGIKKHTVFYNCSCVE. 3 disulfides stabilise this stretch: Cys-459–Cys-489, Cys-465–Cys-485, and Cys-474–Cys-506. Asn-503 and Asn-516 each carry an N-linked (GlcNAc...) asparagine glycan. The helical transmembrane segment at 538–560 threads the bilayer; sequence VAIQVINSLFSATGGTTFILLTV. The Cytoplasmic portion of the chain corresponds to 561 to 569; that stretch reads KIVQPELKA. Residues 570 to 595 traverse the membrane as a helical segment; the sequence is LAMGFQSMVIRTLGGILAPIYFGALI. At 596 to 629 the chain is on the extracellular side; sequence DKTCMKWSTNSCGAQGACRIYNSVFFGRVYLGLS. A helical membrane pass occupies residues 630–647; the sequence is IALRFPALVLYIVFIFAM. Residues 648–695 lie on the Cytoplasmic side of the membrane; it reads KKKFQGKDTKASDNERKVMDEANLEFLNNGEHFVPSAGTDSKTCNLDM. Residue Ser-683 is modified to Phosphoserine.

This sequence belongs to the organo anion transporter (TC 2.A.60) family. N-glycosylated. As to expression, highly expressed in liver, in particular at the basolateral membrane of hepatocytes near the central vein. Expressed in the placenta. In testis, primarily localized to the basal membrane of Sertoli cells and weakly expressed in Leydig cells and within the tubules.

Its subcellular location is the basolateral cell membrane. It localises to the basal cell membrane. It catalyses the reaction estrone 3-sulfate(out) + hydrogencarbonate(in) = estrone 3-sulfate(in) + hydrogencarbonate(out). The enzyme catalyses 17beta-estradiol 17-O-(beta-D-glucuronate)(out) = 17beta-estradiol 17-O-(beta-D-glucuronate)(in). The catalysed reaction is taurocholate(out) = taurocholate(in). It carries out the reaction estrone 3-sulfate(out) = estrone 3-sulfate(in). It catalyses the reaction dehydroepiandrosterone 3-sulfate(out) = dehydroepiandrosterone 3-sulfate(in). The enzyme catalyses leukotriene C4(out) = leukotriene C4(in). The catalysed reaction is L-thyroxine(out) = L-thyroxine(in). It carries out the reaction prostaglandin E2(out) = prostaglandin E2(in). It catalyses the reaction (4E,15E)-bilirubin IXalpha C8-beta-D-glucuronoside(out) = (4E,15E)-bilirubin IXalpha C8-beta-D-glucuronoside(in). The enzyme catalyses bilirubin IXalpha bis-beta-D-glucuronoside(out) = bilirubin IXalpha bis-beta-D-glucuronoside(in). In terms of biological role, mediates the Na(+)-independent uptake of organic anions. Shows broad substrate specificity, can transport both organic anions such as bile acid taurocholate (cholyltaurine) and conjugated steroids (17-beta-glucuronosyl estradiol, dehydroepiandrosterone sulfate (DHEAS), and estrone 3-sulfate), as well as eicosanoid leukotriene C4, prostaglandin E2 and L-thyroxine (T4). Hydrogencarbonate/HCO3(-) acts as the probable counteranion that exchanges for organic anions. Shows a pH-sensitive substrate specificity towards sulfated steroids, taurocholate and T4 which may be ascribed to the protonation state of the binding site and leads to a stimulation of substrate transport in an acidic microenvironment. Involved in the clearance of bile acids and organic anions from the liver. Can take up bilirubin glucuronides from plasma into the liver, contributing to the detoxification-enhancing liver-blood shuttling loop. Transports coproporphyrin I and III, by-products of heme synthesis, and may be involved in their hepatic disposition. May contribute to regulate the transport of organic compounds in testes across the blood-testis-barrier. Can transport HMG-CoA reductase inhibitors (also known as statins) such as pitavastatin, a clinically important class of hypolipidemic drugs. May play an important role in plasma and tissue distribution of the structurally diverse chemotherapeutic drugs methotrexate and paclitaxel. May also transport antihypertension agents, such as the angiotensin-converting enzyme (ACE) inhibitor prodrug enalapril, and the highly selective angiotensin II AT1-receptor antagonist valsartan, in the liver. The chain is Solute carrier organic anion transporter family member 1B3 (SLCO1B3) from Homo sapiens (Human).